Reading from the N-terminus, the 213-residue chain is Protein GrpE (213 aa).

The segment covering 1–23 (MSDEKKPEAETSESLQKREEKLA) has biased composition (basic and acidic residues). Positions 1-43 (MSDEKKPEAETSESLQKREEKLAETLASEPAAQGEAEDAAAAG) are disordered. The span at 29 to 43 (EPAAQGEAEDAAAAG) shows a compositional bias: low complexity.

Belongs to the GrpE family. Homodimer.

It is found in the cytoplasm. Participates actively in the response to hyperosmotic and heat shock by preventing the aggregation of stress-denatured proteins, in association with DnaK and GrpE. It is the nucleotide exchange factor for DnaK and may function as a thermosensor. Unfolded proteins bind initially to DnaJ; upon interaction with the DnaJ-bound protein, DnaK hydrolyzes its bound ATP, resulting in the formation of a stable complex. GrpE releases ADP from DnaK; ATP binding to DnaK triggers the release of the substrate protein, thus completing the reaction cycle. Several rounds of ATP-dependent interactions between DnaJ, DnaK and GrpE are required for fully efficient folding. The chain is Protein GrpE from Parvibaculum lavamentivorans (strain DS-1 / DSM 13023 / NCIMB 13966).